A 96-amino-acid polypeptide reads, in one-letter code: (4S)-4-hydroxy-5-phosphonooxypentane-2,3-dione isomerase (96 aa).

Positions 2–91 (HVTLVEINVH…MTGPRKKRLF (90 aa)) constitute an ABM domain.

The protein belongs to the LsrG family. Homodimer.

It localises to the cytoplasm. The enzyme catalyses (2S)-2-hydroxy-3,4-dioxopentyl phosphate = 3-hydroxy-2,4-dioxopentyl phosphate. Functionally, involved in the degradation of phospho-AI-2, thereby terminating induction of the lsr operon and closing the AI-2 signaling cycle. Catalyzes the conversion of (4S)-4-hydroxy-5-phosphonooxypentane-2,3-dione (P-DPD) to 3-hydroxy-5-phosphonooxypentane-2,4-dione (P-HPD). The chain is (4S)-4-hydroxy-5-phosphonooxypentane-2,3-dione isomerase from Escherichia coli O9:H4 (strain HS).